The following is a 255-amino-acid chain: NADH dehydrogenase [ubiquinone] flavoprotein 2, mitochondrial (255 aa).

A mitochondrion-targeting transit peptide spans 1–35 (MLARLAAKRLLEIRQVFRQPTSQVTRSLSTALNYH). Residues C130, C135, C171, and C175 each coordinate [2Fe-2S] cluster. The tract at residues 214–255 (RKGEKPPHGTQNPKRIKCGPEGGNKTLLGEPKPPQFRDLDAC) is disordered.

The protein belongs to the complex I 24 kDa subunit family. As to quaternary structure, complex I is composed of at least 49 different subunits. This is a component of the flavoprotein-sulfur (FP) fragment of the enzyme. [2Fe-2S] cluster serves as cofactor.

The protein localises to the mitochondrion inner membrane. It catalyses the reaction a ubiquinone + NADH + 5 H(+)(in) = a ubiquinol + NAD(+) + 4 H(+)(out). Functionally, core subunit of the mitochondrial membrane respiratory chain NADH dehydrogenase (Complex I) that is believed to belong to the minimal assembly required for catalysis. Complex I functions in the transfer of electrons from NADH to the respiratory chain. The immediate electron acceptor for the enzyme is believed to be ubiquinone. In Arabidopsis thaliana (Mouse-ear cress), this protein is NADH dehydrogenase [ubiquinone] flavoprotein 2, mitochondrial.